A 278-amino-acid chain; its full sequence is F-box only protein 17 (278 aa).

Residues 15–62 (SLALDALPPELLVQVLSHVPPRSLVTRCRPVCRAWRDIVDGPTVWLLQ) enclose the F-box domain. Positions 99 to 275 (YCLRAPFGRN…VTHSSVRVRI (177 aa)) constitute an FBA domain.

As to quaternary structure, part of a SCF (SKP1-cullin-F-box) protein ligase complex. Interacts with SKP1 and CUL1. In terms of tissue distribution, expressed in heart, skeletal muscle, liver and kidney. Expressed at lower levels in spleen and brain.

Substrate-recognition component of the SCF (SKP1-CUL1-F-box protein)-type E3 ubiquitin ligase complex. Able to recognize and bind denatured glycoproteins, which are modified with complex-type oligosaccharides. Also recognizes sulfated glycans. Does not bind high-mannose glycoproteins. This is F-box only protein 17 (FBXO17) from Homo sapiens (Human).